A 561-amino-acid chain; its full sequence is BTB/POZ domain-containing protein At2g46260 (561 aa).

2 disordered regions span residues Met1–Phe31 and Leu100–Asp119. Residues Asp17 to Glu28 show a composition bias toward polar residues. Over residues Asp107–Asp119 the composition is skewed to acidic residues. The BTB domain occupies Ile143 to Thr212. The BACK domain occupies Gln266–Val358.

The protein operates within protein modification; protein ubiquitination. May act as a substrate-specific adapter of an E3 ubiquitin-protein ligase complex (CUL3-RBX1-BTB) which mediates the ubiquitination and subsequent proteasomal degradation of target proteins. The chain is BTB/POZ domain-containing protein At2g46260 from Arabidopsis thaliana (Mouse-ear cress).